Reading from the N-terminus, the 72-residue chain is Protein kish-A (72 aa).

A signal peptide spans 1 to 26 (MSAIFNFQSLLTVILLLICTCAYIRS). Residues 27-53 (LAPSILDRNKTGLLGIFWKCARIGERK) lie on the Extracellular side of the membrane. An N-linked (GlcNAc...) asparagine glycan is attached at N35. Residues 54-71 (SPYVAICCIVMAFSILFI) form a helical membrane-spanning segment. Residue Q72 is a topological domain, cytoplasmic.

This sequence belongs to the KISH family.

It is found in the golgi apparatus membrane. Involved in the early part of the secretory pathway. The protein is Protein kish-A (Tmem167a) of Mus musculus (Mouse).